Consider the following 571-residue polypeptide: UvrABC system protein C (571 aa).

One can recognise a GIY-YIG domain in the interval 15 to 93 (TSPGVYLWKD…IDRYNPEFNI (79 aa)). Positions 184–219 (NNYINELTNKMHQAANNMQFELALFLRDGLTYLKKL) constitute a UVR domain.

It belongs to the UvrC family. Interacts with UvrB in an incision complex.

It localises to the cytoplasm. The UvrABC repair system catalyzes the recognition and processing of DNA lesions. UvrC both incises the 5' and 3' sides of the lesion. The N-terminal half is responsible for the 3' incision and the C-terminal half is responsible for the 5' incision. The sequence is that of UvrABC system protein C from Mycoplasmopsis bovis (strain ATCC 25523 / DSM 22781 / NCTC 10131 / PG45) (Mycoplasma bovis).